The primary structure comprises 146 residues: Hemoglobin subunit beta (146 aa).

At valine 1 the chain carries N-acetylvaline. The 145-residue stretch at 2-146 (HLTPEEKVAV…VANALAHKYH (145 aa)) folds into the Globin domain. At threonine 12 the chain carries Phosphothreonine. Residue serine 44 is modified to Phosphoserine. Position 59 is an N6-acetyllysine (lysine 59). Histidine 63 is a heme b binding site. N6-acetyllysine is present on lysine 82. Histidine 92 contributes to the heme b binding site. At cysteine 93 the chain carries S-nitrosocysteine. N6-acetyllysine is present on lysine 144.

The protein belongs to the globin family. As to quaternary structure, heterotetramer of two alpha chains and two beta chains. Red blood cells.

Involved in oxygen transport from the lung to the various peripheral tissues. The polypeptide is Hemoglobin subunit beta (HBB) (Cercocebus atys (Sooty mangabey)).